The sequence spans 257 residues: Thiazole synthase (257 aa).

The Schiff-base intermediate with DXP role is filled by Lys100. 1-deoxy-D-xylulose 5-phosphate is bound by residues Gly161, 187–188, and 209–210; these read AG and NT.

This sequence belongs to the ThiG family. Homotetramer. Forms heterodimers with either ThiH or ThiS.

The protein localises to the cytoplasm. The catalysed reaction is [ThiS sulfur-carrier protein]-C-terminal-Gly-aminoethanethioate + 2-iminoacetate + 1-deoxy-D-xylulose 5-phosphate = [ThiS sulfur-carrier protein]-C-terminal Gly-Gly + 2-[(2R,5Z)-2-carboxy-4-methylthiazol-5(2H)-ylidene]ethyl phosphate + 2 H2O + H(+). The protein operates within cofactor biosynthesis; thiamine diphosphate biosynthesis. Functionally, catalyzes the rearrangement of 1-deoxy-D-xylulose 5-phosphate (DXP) to produce the thiazole phosphate moiety of thiamine. Sulfur is provided by the thiocarboxylate moiety of the carrier protein ThiS. In vitro, sulfur can be provided by H(2)S. This Zymomonas mobilis subsp. mobilis (strain ATCC 31821 / ZM4 / CP4) protein is Thiazole synthase.